A 154-amino-acid polypeptide reads, in one-letter code: Small ribosomal subunit protein uS7 (154 aa).

The protein belongs to the universal ribosomal protein uS7 family. In terms of assembly, part of the 30S ribosomal subunit. Contacts proteins S9 and S11.

Its function is as follows. One of the primary rRNA binding proteins, it binds directly to 16S rRNA where it nucleates assembly of the head domain of the 30S subunit. Is located at the subunit interface close to the decoding center, probably blocks exit of the E-site tRNA. The chain is Small ribosomal subunit protein uS7 from Karelsulcia muelleri (strain GWSS) (Sulcia muelleri).